Here is a 54-residue protein sequence, read N- to C-terminus: uncharacterized protein (54 aa).

The tract at residues 13–54 (VAGDSGGNPENISIGTTSGAVVNKGPEQIPKKKKEESKEKEE) is disordered. Residues 20 to 32 (NPENISIGTTSGA) are compositionally biased toward polar residues. A compositionally biased stretch (basic and acidic residues) spans 41 to 54 (IPKKKKEESKEKEE).

This is an uncharacterized protein from Enterobacteria phage T4 (Bacteriophage T4).